Reading from the N-terminus, the 526-residue chain is Glucomannan 4-beta-mannosyltransferase 1 (526 aa).

A helical membrane pass occupies residues 31–51 (VIIPLLKLAVIVCSVMSIMLF). Residue Asp130 is part of the active site. Residues Asp189 and Asp191 each contribute to the substrate site. The active site involves Asp283. A run of 4 helical transmembrane segments spans residues 362 to 382 (IVAHWVTFFFYCIVIPACVIV), 399 to 419 (ITILNAVSTPRSMHLLVLWIL), 477 to 497 (PLEIIVGMYMLHCATYDLLFG), and 501 to 521 (FFVYLLLQAGAFFTMGFGLVG).

This sequence belongs to the glycosyltransferase 2 family. Plant cellulose synthase-like A subfamily.

The protein localises to the golgi apparatus membrane. The catalysed reaction is GDP-mannose + (glucomannan)n = GDP + (glucomannan)n+1.. Functionally, possesses 4-beta-mannosyltransferase activity on mannan using GDP-mannose. The beta-1,4-mannan product is the backbone for galactomannan synthesis by galactomannan galactosyltransferase. The galactomannan is a hemicellulosic storage polysaccharide accumulated in the form of secondary wall thickenings in the seed endosperm. The protein is Glucomannan 4-beta-mannosyltransferase 1 of Cyamopsis tetragonoloba (Guar).